The primary structure comprises 423 residues: D-tagatose-1,6-bisphosphate aldolase subunit GatZ (423 aa).

It belongs to the GatZ/KbaZ family. GatZ subfamily. In terms of assembly, forms a complex with GatY.

It participates in carbohydrate metabolism; D-tagatose 6-phosphate degradation; D-glyceraldehyde 3-phosphate and glycerone phosphate from D-tagatose 6-phosphate: step 2/2. In terms of biological role, component of the tagatose-1,6-bisphosphate aldolase GatYZ that is required for full activity and stability of the Y subunit. Could have a chaperone-like function for the proper and stable folding of GatY. When expressed alone, GatZ does not show any aldolase activity. Is involved in the catabolism of galactitol. This is D-tagatose-1,6-bisphosphate aldolase subunit GatZ from Salmonella enteritidis PT4 (strain P125109).